We begin with the raw amino-acid sequence, 132 residues long: Small ribosomal subunit protein uS8 (132 aa).

This sequence belongs to the universal ribosomal protein uS8 family. As to quaternary structure, part of the 30S ribosomal subunit. Contacts proteins S5 and S12.

Its function is as follows. One of the primary rRNA binding proteins, it binds directly to 16S rRNA central domain where it helps coordinate assembly of the platform of the 30S subunit. This chain is Small ribosomal subunit protein uS8, found in Acidobacterium capsulatum (strain ATCC 51196 / DSM 11244 / BCRC 80197 / JCM 7670 / NBRC 15755 / NCIMB 13165 / 161).